The following is a 192-amino-acid chain: UPF0312 protein Avin_03250 (192 aa).

Positions 1-23 are cleaved as a signal peptide; that stretch reads MLKKTLAALALGSALLGAGQAMA.

This sequence belongs to the UPF0312 family. Type 1 subfamily.

The protein resides in the periplasm. The protein is UPF0312 protein Avin_03250 of Azotobacter vinelandii (strain DJ / ATCC BAA-1303).